Reading from the N-terminus, the 447-residue chain is 2-oxoadipate dioxygenase/decarboxylase (447 aa).

Positions 68, 72, and 224 each coordinate 2-oxoadipate. His-68 is a Fe(2+) binding site. Residues His-224 and Glu-290 each contribute to the Fe(2+) site. Val-391 is a binding site for 2-oxoadipate.

The protein belongs to the 2-oxoadipate dioxygenase/decarboxylase family. Fe(2+) is required as a cofactor.

The enzyme catalyses 2-oxoadipate + O2 = (R)-2-hydroxyglutarate + CO2. Functionally, catalyzes the decarboxylation and hydroxylation of 2-oxoadipate (2OA) to form D-2-hydroxyglutarate (D-2-HGA). This is 2-oxoadipate dioxygenase/decarboxylase from Shigella flexneri.